We begin with the raw amino-acid sequence, 1045 residues long: MNLQAQPKAQNKRKRCLFGGQEPAPKEQPPPLQPPQQSIRVKEEQYLGHEGPGGAVSTSQPVELPPPSSLALLNSVVYGPERTSAAMLSQQVASVKWPNSVMAPGRGPERGGGGGVSDSSWQQQPGQPPPHSTWNCHSLSLYSATKGSPHPGVGVPTYYNHPEALKREKAGGPQLDRYVRPMMPQKVQLEVGRPQAPLNSFHAAKKPPNQSLPLQPFQLAFGHQVNRQVFRQGPPPPNPVAAFPPQKQQQQQQPQQQQQQQQAALPQMPLFENFYSMPQQPSQQPQDFGLQPAGPLGQSHLAHHSMAPYPFPPNPDMNPELRKALLQDSAPQPALPQVQIPFPRRSRRLSKEGILPPSALDGAGTQPGQEATGNLFLHHWPLQQPPPGSLGQPHPEALGFPLELRESQLLPDGERLAPNGREREAPAMGSEEGMRAVSTGDCGQVLRGGVIQSTRRRRRASQEANLLTLAQKAVELASLQNAKDGSGSEEKRKSVLASTTKCGVEFSEPSLATKRAREDSGMVPLIIPVSVPVRTVDPTEAAQAGGLDEDGKGPEQNPAEHKPSVIVTRRRSTRIPGTDAQAQAEDMNVKLEGEPSVRKPKQRPRPEPLIIPTKAGTFIAPPVYSNITPYQSHLRSPVRLADHPSERSFELPPYTPPPILSPVREGSGLYFNAIISTSTIPAPPPITPKSAHRTLLRTNSAEVTPPVLSVMGEATPVSIEPRINVGSRFQAEIPLMRDRALAAADPHKADLVWQPWEDLESSREKQRQVEDLLTAACSSIFPGAGTNQELALHCLHESRGDILETLNKLLLKKPLRPHNHPLATYHYTGSDQWKMAERKLFNKGIAIYKKDFFLVQKLIQTKTVAQCVEFYYTYKKQVKIGRNGTLTFGDVDTSDEKSAQEEVEVDIKTSQKFPRVPLPRRESPSEERLEPKREVKEPRKEGEEEVPEIQEKEEQEEGRERSRRAAAVKATQTLQANESASDILILRSHESNAPGSAGGQASEKPREGTGKSRRALPFSEKKKKTETFSKTQNQENTFPCKKCGR.

An N-acetylmethionine modification is found at M1. Disordered regions lie at residues 1 to 68 (MNLQ…PPPS) and 99 to 159 (NSVM…PTYY). Positions 132–146 (STWNCHSLSLYSATK) are enriched in polar residues. K166 is covalently cross-linked (Glycyl lysine isopeptide (Lys-Gly) (interchain with G-Cter in SUMO2)). R193 carries the asymmetric dimethylarginine modification. Disordered regions lie at residues 228–264 (QVFR…QQAA), 276–305 (SMPQ…AHHS), 330–349 (APQP…SRRL), 378–397 (HHWP…HPEA), and 410–441 (LPDG…STGD). Positions 240–264 (VAAFPPQKQQQQQQPQQQQQQQQAA) are enriched in low complexity. The span at 412 to 425 (DGERLAPNGREREA) shows a compositional bias: basic and acidic residues. R447 is subject to Omega-N-methylarginine. At S461 the chain carries Phosphoserine. The segment at 543–563 (QAGGLDEDGKGPEQNPAEHKP) is disordered. A compositionally biased stretch (basic and acidic residues) spans 549-563 (EDGKGPEQNPAEHKP). Residue K590 forms a Glycyl lysine isopeptide (Lys-Gly) (interchain with G-Cter in SUMO1); alternate linkage. A Glycyl lysine isopeptide (Lys-Gly) (interchain with G-Cter in SUMO2); alternate cross-link involves residue K590. At T655 the chain carries Phosphothreonine. S661 carries the phosphoserine modification. Phosphothreonine is present on T704. S709 bears the Phosphoserine mark. At T715 the chain carries Phosphothreonine. An ELM2 domain is found at 721-813 (PRINVGSRFQ…ETLNKLLLKK (93 aa)). Residues 828 to 879 (TGSDQWKMAERKLFNKGIAIYKKDFFLVQKLIQTKTVAQCVEFYYTYKKQVK) form the SANT domain. The tract at residues 887-1045 (TFGDVDTSDE…NTFPCKKCGR (159 aa)) is disordered. 2 stretches are compositionally biased toward basic and acidic residues: residues 894–909 (SDEK…DIKT) and 919–942 (PRRE…RKEG). Phosphoserine is present on S923. Acidic residues predominate over residues 943-957 (EEEVPEIQEKEEQEE). The span at 970-980 (ATQTLQANESA) shows a compositional bias: polar residues.

Interacts with DNTTIP1. Identified in a histone deacetylase complex that contains DNTTIP1, HDAC1 and MIDEAS; this complex assembles into a tetramer that contains four copies of each protein chain.

The protein resides in the nucleus. The protein is Mitotic deacetylase-associated SANT domain protein of Homo sapiens (Human).